The following is a 439-amino-acid chain: IAA-amino acid hydrolase ILR1-like 2 (439 aa).

Residues 1 to 21 form the signal peptide; sequence MALNKLLSLTFQLLLFLLSVS. Cysteine 137, histidine 139, glutamate 173, histidine 197, and histidine 397 together coordinate Mn(2+). Residues 436–439 carry the Prevents secretion from ER motif; it reads HEEL.

This sequence belongs to the peptidase M20 family. In terms of assembly, monomer. Requires Mn(2+) as cofactor. As to expression, expressed in leaves, stems, siliques, seeds and flowers. Detected in the distal tips of cotyledons and seedling leaves, hydathodes of leaves from mature plants, pollen, ovules and developing seeds.

It is found in the endoplasmic reticulum lumen. Its function is as follows. Hydrolyzes certain amino acid conjugates of the plant growth regulator indole-3-acetic acid (IAA), including IAA-Ala, IAA-Leu, IAA-Met, IAA-Phe, IAA-Ser, IAA-Thr, IAA-Tyr and IAA-Val. Is the most efficient enzyme of the ILL family for IAA-Ala. Not important for IAA-Leu hydrolysis in roots. May act with ILR1 to provide free IAA to germinating seedlings. This Arabidopsis thaliana (Mouse-ear cress) protein is IAA-amino acid hydrolase ILR1-like 2.